A 448-amino-acid chain; its full sequence is N-succinylarginine dihydrolase (448 aa).

Residues 19–28 (GGLSYGNVAS), Asn110, and 137–138 (HR) each bind substrate. Residue Glu174 is part of the active site. Position 214 (Arg214) interacts with substrate. The active site involves His250. Asp252 and Asn365 together coordinate substrate. Cys371 functions as the Nucleophile in the catalytic mechanism.

The protein belongs to the succinylarginine dihydrolase family. Homodimer.

It catalyses the reaction N(2)-succinyl-L-arginine + 2 H2O + 2 H(+) = N(2)-succinyl-L-ornithine + 2 NH4(+) + CO2. The protein operates within amino-acid degradation; L-arginine degradation via AST pathway; L-glutamate and succinate from L-arginine: step 2/5. In terms of biological role, catalyzes the hydrolysis of N(2)-succinylarginine into N(2)-succinylornithine, ammonia and CO(2). The protein is N-succinylarginine dihydrolase of Pseudomonas paraeruginosa (strain DSM 24068 / PA7) (Pseudomonas aeruginosa (strain PA7)).